We begin with the raw amino-acid sequence, 530 residues long: Glucose-6-phosphate isomerase (530 aa).

Residue glutamate 322 is the Proton donor of the active site. Catalysis depends on residues histidine 351 and lysine 455.

Belongs to the GPI family.

It is found in the cytoplasm. It catalyses the reaction alpha-D-glucose 6-phosphate = beta-D-fructose 6-phosphate. It functions in the pathway carbohydrate biosynthesis; gluconeogenesis. It participates in carbohydrate degradation; glycolysis; D-glyceraldehyde 3-phosphate and glycerone phosphate from D-glucose: step 2/4. Functionally, catalyzes the reversible isomerization of glucose-6-phosphate to fructose-6-phosphate. The sequence is that of Glucose-6-phosphate isomerase from Geobacter sp. (strain M21).